The primary structure comprises 840 residues: Cytosolic carboxypeptidase 2 (840 aa).

The 271-residue stretch at 358 to 628 (YPYTYTDLQC…HVCDTLLDFC (271 aa)) folds into the Peptidase M14 domain. Positions 424, 427, and 520 each coordinate Zn(2+). Glu-592 (proton donor/acceptor) is an active-site residue. The span at 706–719 (MFKKKKKKSLQTRK) shows a compositional bias: basic residues. Disordered stretches follow at residues 706–726 (MFKK…EQYQ) and 758–789 (ESSS…LDPS).

It belongs to the peptidase M14 family. In terms of assembly, interacts with RARRES1, KIF11 and MAPRE1. The cofactor is Zn(2+).

It is found in the cytoplasm. The protein resides in the cytosol. It localises to the cytoskeleton. The protein localises to the microtubule organizing center. Its subcellular location is the centrosome. It is found in the centriole. The protein resides in the cilium basal body. It catalyses the reaction (L-glutamyl)(n+1)-gamma-L-glutamyl-L-glutamyl-[protein] + H2O = (L-glutamyl)(n)-gamma-L-glutamyl-L-glutamyl-[protein] + L-glutamate. Inhibited by RARRES1. Its function is as follows. Metallocarboxypeptidase that mediates deglutamylation of tubulin and non-tubulin target proteins. Catalyzes the removal of polyglutamate side chains present on the gamma-carboxyl group of glutamate residues within the C-terminal tail of tubulin protein. Specifically cleaves tubulin long-side-chains, while it is not able to remove the branching point glutamate. Also catalyzes the removal of polyglutamate residues from the carboxy-terminus of non-tubulin proteins such as MYLK. The polypeptide is Cytosolic carboxypeptidase 2 (AGBL2) (Macaca fascicularis (Crab-eating macaque)).